The sequence spans 777 residues: Protein argonaute (777 aa).

The segment at M1–A107 is N-terminal domain. The tract at residues L108–A182 is linker L1. A PAZ domain region spans residues S183–G243. The linker L2 stretch occupies residues S244–Y341. Residues A342 to G509 are mid domain. Positions G445–S757 constitute a Piwi domain. The interval T510 to L777 is PIWI domain. L777 serves as a coordination point for Mg(2+).

It belongs to the argonaute family. Long pAgo subfamily. Mg(2+) serves as cofactor.

Functionally, a catalytically inactive argonaute protein. Binds 5'-phosphorylated RNA as the guide (gRNA) and short DNA as target DNA (tDNA); does not bind other nucleic acid combinations, does not bind tDNA alone. Has highest affinity for gRNA that begins with 5'-phospho-U and poor affinity for gRNA with 5'-OH. Upon expression in E.coli, plasmid sequences are found in RsAgo, its induction leads to plasmid degradation and suppression of genes encoded on foreign plasmids, suggesting it may also interfere with transcription. Does not interact with preformed gRNA:tDNA duplexes. Mismatches and nt bulges are tolerated in the ternary complex, however, they significantly reduce the affinity of RsAgo:gRNA for tDNA. Mismatched tDNA can cause dissociation of gRNA from RsAgo. In situ binds 2 populations of RNA (15-19 and 45 nucleotides, nt) and a population of ssDNA 22-24 nt in length. The small sense RNA is probably derived from mRNA degradation and strongly enriched for U in the first and U/C in the second positions. The small DNA is enriched for sequences complementary to the RNA, with 3 nt overhangs on both ends; another nuclease may trim the ends. The sequences are largely derived from exogenous plasmids or genome-encoded foreign elements such as prophages and transposons. Forms a ternary complex with gRNA and double-stranded tDNA only when the tDNA is open. This chain is Protein argonaute, found in Cereibacter sphaeroides (strain ATCC 17025 / ATH 2.4.3) (Rhodobacter sphaeroides).